The sequence spans 304 residues: Aspartate carbamoyltransferase catalytic subunit (304 aa).

Carbamoyl phosphate is bound by residues R53 and T54. K82 is an L-aspartate binding site. R103, H131, and Q134 together coordinate carbamoyl phosphate. L-aspartate contacts are provided by R163 and R224. Carbamoyl phosphate is bound by residues L263 and P264.

This sequence belongs to the aspartate/ornithine carbamoyltransferase superfamily. ATCase family. In terms of assembly, heterooligomer of catalytic and regulatory chains.

The catalysed reaction is carbamoyl phosphate + L-aspartate = N-carbamoyl-L-aspartate + phosphate + H(+). Its pathway is pyrimidine metabolism; UMP biosynthesis via de novo pathway; (S)-dihydroorotate from bicarbonate: step 2/3. Its function is as follows. Catalyzes the condensation of carbamoyl phosphate and aspartate to form carbamoyl aspartate and inorganic phosphate, the committed step in the de novo pyrimidine nucleotide biosynthesis pathway. The protein is Aspartate carbamoyltransferase catalytic subunit of Haloquadratum walsbyi (strain DSM 16790 / HBSQ001).